The sequence spans 147 residues: Large ribosomal subunit protein bL9 (147 aa).

This sequence belongs to the bacterial ribosomal protein bL9 family.

In terms of biological role, binds to the 23S rRNA. This is Large ribosomal subunit protein bL9 from Campylobacter hominis (strain ATCC BAA-381 / DSM 21671 / CCUG 45161 / LMG 19568 / NCTC 13146 / CH001A).